The primary structure comprises 250 residues: Isoprenyl transferase (250 aa).

D27 is a catalytic residue. D27 contacts Mg(2+). Substrate-binding positions include 28-31 (GNRR), W32, H48, and 76-78 (STE). N79 serves as the catalytic Proton acceptor. Residues F80, R82, R199, and 205 to 207 (RVS) each bind substrate. Residue E218 participates in Mg(2+) binding.

It belongs to the UPP synthase family. Homodimer. Requires Mg(2+) as cofactor.

In terms of biological role, catalyzes the condensation of isopentenyl diphosphate (IPP) with allylic pyrophosphates generating different type of terpenoids. This chain is Isoprenyl transferase, found in Chlamydia pneumoniae (Chlamydophila pneumoniae).